The primary structure comprises 122 residues: MARLAGVDLPRNKRMEVALTYIYGIGPARAAQLLEETGISPDLRTDNLTDEQVSALRDVIEATWKVEGDLRRQVQADIRRKIEIGCYQGLRHRRGLPVRGQRTKTNARTRKGPKKTIAGKKK.

The interval 95–122 (GLPVRGQRTKTNARTRKGPKKTIAGKKK) is disordered.

The protein belongs to the universal ribosomal protein uS13 family. Part of the 30S ribosomal subunit. Forms a loose heterodimer with protein S19. Forms two bridges to the 50S subunit in the 70S ribosome.

Its function is as follows. Located at the top of the head of the 30S subunit, it contacts several helices of the 16S rRNA. In the 70S ribosome it contacts the 23S rRNA (bridge B1a) and protein L5 of the 50S subunit (bridge B1b), connecting the 2 subunits; these bridges are implicated in subunit movement. Contacts the tRNAs in the A and P-sites. This chain is Small ribosomal subunit protein uS13, found in Corynebacterium diphtheriae (strain ATCC 700971 / NCTC 13129 / Biotype gravis).